The chain runs to 461 residues: Probable carboxypeptidase MGYG_04702 (461 aa).

The first 20 residues, 1-20 (MQKTYLLALVSLLASSLVEA), serve as a signal peptide directing secretion. 2 N-linked (GlcNAc...) asparagine glycosylation sites follow: N48 and N99. A Zn(2+)-binding site is contributed by D176. E208 (proton acceptor) is an active-site residue. Position 209 (E209) interacts with Zn(2+). N396 is a glycosylation site (N-linked (GlcNAc...) asparagine).

The protein belongs to the peptidase M20A family. The cofactor is Zn(2+).

The protein resides in the secreted. The chain is Probable carboxypeptidase MGYG_04702 from Arthroderma gypseum (strain ATCC MYA-4604 / CBS 118893) (Microsporum gypseum).